A 300-amino-acid chain; its full sequence is uncharacterized protein (300 aa).

8 helical membrane passes run 13–35, 45–67, 80–102, 106–128, 180–202, 217–236, 243–265, and 275–294; these read LLCI…LQPL, MLTM…SLLS, WVLF…WAPL, GINI…WAWL, IPAL…IYIL, YWLL…SANL, PVSI…AVFV, and YFTY…EGLL.

This sequence belongs to the EamA transporter family.

It is found in the cell membrane. This is an uncharacterized protein from Haemophilus influenzae (strain ATCC 51907 / DSM 11121 / KW20 / Rd).